A 211-amino-acid polypeptide reads, in one-letter code: uncharacterized protein (211 aa).

This sequence belongs to the A.longa ORF167/ORF288 family.

Its subcellular location is the plastid. This is an uncharacterized protein from Euglena longa (Euglenophycean alga).